The following is a 169-amino-acid chain: Lutropin/choriogonadotropin subunit beta (169 aa).

The N-terminal stretch at 1 to 20 is a signal peptide; that stretch reads MEMLQGLLLWMLLSVGGVWA. Disulfide bonds link Cys-29–Cys-77, Cys-43–Cys-92, Cys-46–Cys-130, Cys-54–Cys-108, Cys-58–Cys-110, and Cys-113–Cys-120. Asn-33 carries N-linked (GlcNAc...) asparagine glycosylation. Residues 131 to 169 are disordered; it reads APQASSSSKDPPSQPLTSTSTPTPGASNRSSHPLPIKTS. Residues 145–154 are compositionally biased toward low complexity; the sequence is PLTSTSTPTP. The segment covering 155 to 169 has biased composition (polar residues); the sequence is GASNRSSHPLPIKTS. N-linked (GlcNAc...) asparagine glycosylation is present at Asn-158.

Belongs to the glycoprotein hormones subunit beta family. In terms of assembly, heterodimer of a common alpha chain and a unique beta chain which confers biological specificity to thyrotropin, lutropin, follitropin and gonadotropin.

Its subcellular location is the secreted. Its function is as follows. Promotes spermatogenesis and ovulation by stimulating the testes and ovaries to synthesize steroids. This is Lutropin/choriogonadotropin subunit beta (LHB) from Equus quagga burchellii (Burchell's zebra).